Reading from the N-terminus, the 191-residue chain is ATP-dependent Clp protease proteolytic subunit 1 (191 aa).

The active-site Nucleophile is serine 91. Histidine 116 is an active-site residue.

It belongs to the peptidase S14 family. As to quaternary structure, fourteen ClpP subunits assemble into 2 heptameric rings which stack back to back to give a disk-like structure with a central cavity, resembling the structure of eukaryotic proteasomes.

Its subcellular location is the cytoplasm. It catalyses the reaction Hydrolysis of proteins to small peptides in the presence of ATP and magnesium. alpha-casein is the usual test substrate. In the absence of ATP, only oligopeptides shorter than five residues are hydrolyzed (such as succinyl-Leu-Tyr-|-NHMec, and Leu-Tyr-Leu-|-Tyr-Trp, in which cleavage of the -Tyr-|-Leu- and -Tyr-|-Trp bonds also occurs).. Cleaves peptides in various proteins in a process that requires ATP hydrolysis. Has a chymotrypsin-like activity. Plays a major role in the degradation of misfolded proteins. This chain is ATP-dependent Clp protease proteolytic subunit 1, found in Chlamydia caviae (strain ATCC VR-813 / DSM 19441 / 03DC25 / GPIC) (Chlamydophila caviae).